The primary structure comprises 352 residues: Protein Wnt-3a (352 aa).

The first 18 residues, 1-18 (MAPLGYFLLLCSLKQALG), serve as a signal peptide directing secretion. 11 disulfide bridges follow: Cys-77/Cys-88, Cys-128/Cys-136, Cys-138/Cys-155, Cys-203/Cys-217, Cys-205/Cys-212, Cys-281/Cys-312, Cys-297/Cys-307, Cys-311/Cys-351, Cys-327/Cys-342, Cys-329/Cys-339, and Cys-334/Cys-335. An N-linked (GlcNAc...) asparagine glycan is attached at Asn-87. Ser-209 carries the O-palmitoleoyl serine; by PORCN lipid modification. Asn-298 carries an N-linked (GlcNAc...) asparagine glycan.

This sequence belongs to the Wnt family. Forms a soluble 1:1 complex with AFM; this prevents oligomerization and is required for prolonged biological activity. The complex with AFM may represent the physiological form in body fluids. Homooligomer; disulfide-linked, leading to inactivation. Interacts with PORCN. Interacts with APCDD1 and WLS. Component of the Wnt-Fzd-LRP5-LRP6 signaling complex that contains a WNT protein, a FZD protein and LRP5 or LRP6. Interacts directly in the complex with LRP6. Interacts with glypican GPC3. Interacts with PKD1 (via extracellular domain). Interacts with FZD5. Palmitoleoylation by PORCN is required for efficient binding to frizzled receptors. Palmitoleoylation is required for proper trafficking to cell surface, vacuolar acidification is critical to release palmitoleoylated WNT3A from WLS in secretory vesicles. Depalmitoleoylated by NOTUM, leading to inhibit Wnt signaling pathway, possibly by promoting disulfide bond formation and oligomerization. In terms of processing, proteolytic processing by TIKI1 and TIKI2 promotes oxidation and formation of large disulfide-bond oligomers, leading to inactivation of WNT3A. Post-translationally, disulfide bonds have critical and distinct roles in secretion and activity. Loss of each conserved cysteine in WNT3A results in high molecular weight oxidized Wnt oligomers, which are formed through inter-Wnt disulfide bonding. In terms of tissue distribution, moderately expressed in placenta and at low levels in adult lung, spleen, and prostate.

It is found in the secreted. It localises to the extracellular space. The protein resides in the extracellular matrix. Its function is as follows. Ligand for members of the frizzled family of seven transmembrane receptors. Functions in the canonical Wnt signaling pathway that results in activation of transcription factors of the TCF/LEF family. Required for normal embryonic mesoderm development and formation of caudal somites. Required for normal morphogenesis of the developing neural tube. Mediates self-renewal of the stem cells at the bottom on intestinal crypts (in vitro). The chain is Protein Wnt-3a (WNT3A) from Homo sapiens (Human).